Reading from the N-terminus, the 261-residue chain is MSVVTMKELLEAGAHFGHQVKRWNPKMKKYIFAERNGIHIIDLQKTVKGIEEAYEFLKTVSAEGGSILFVGTKKQAQDAIQEEAKRAGVFYVNHRWLGGMLTNFATVRKSVEKWQRIEQMKEDGTLYLHTKKEIAKYEKERQKLELNLIGIKDMMEIPKAIFIVDIKKEKIAVEEAIKLGIPIAAIVDTNCDPDLVDYVIPGNDDAIRAIKLITSKMADAILEGKEIFMKKLEEEAEKAAIKEKILQEEEYQKSMDEYIEE.

It belongs to the universal ribosomal protein uS2 family.

The protein is Small ribosomal subunit protein uS2 of Thermodesulfovibrio yellowstonii (strain ATCC 51303 / DSM 11347 / YP87).